The following is a 193-amino-acid chain: Large ribosomal subunit protein eL19A (193 aa).

Positions 156 to 179 are disordered; it reads QEQQDARRARAKAARQRRAKAVEE. Over residues 164-174 the composition is skewed to basic residues; sequence ARAKAARQRRA.

It belongs to the eukaryotic ribosomal protein eL19 family. As to quaternary structure, component of the large ribosomal subunit (LSU). Mature yeast ribosomes consist of a small (40S) and a large (60S) subunit. The 40S small subunit contains 1 molecule of ribosomal RNA (18S rRNA) and at least 33 different proteins. The large 60S subunit contains 3 rRNA molecules (25S, 5.8S and 5S rRNA) and at least 46 different proteins. eL19 lies in close proximity to the binding site for eukaryotic initiation factor eIF4G.

Its subcellular location is the cytoplasm. Its function is as follows. Component of the ribosome, a large ribonucleoprotein complex responsible for the synthesis of proteins in the cell. The small ribosomal subunit (SSU) binds messenger RNAs (mRNAs) and translates the encoded message by selecting cognate aminoacyl-transfer RNA (tRNA) molecules. The large subunit (LSU) contains the ribosomal catalytic site termed the peptidyl transferase center (PTC), which catalyzes the formation of peptide bonds, thereby polymerizing the amino acids delivered by tRNAs into a polypeptide chain. The nascent polypeptides leave the ribosome through a tunnel in the LSU and interact with protein factors that function in enzymatic processing, targeting, and the membrane insertion of nascent chains at the exit of the ribosomal tunnel. eL19 may play a role in the last stages of translation initiation, in particular subunit joining and shedding/releasing factors. This Schizosaccharomyces pombe (strain 972 / ATCC 24843) (Fission yeast) protein is Large ribosomal subunit protein eL19A (rpl1901).